A 160-amino-acid chain; its full sequence is Nucleotide-binding protein VSAL_I1728 (160 aa).

The protein belongs to the YajQ family.

Nucleotide-binding protein. In Aliivibrio salmonicida (strain LFI1238) (Vibrio salmonicida (strain LFI1238)), this protein is Nucleotide-binding protein VSAL_I1728.